Here is a 143-residue protein sequence, read N- to C-terminus: Mini-ribonuclease 3 (143 aa).

The active site involves aspartate 23.

Belongs to the MrnC RNase family. As to quaternary structure, homodimer. Mg(2+) is required as a cofactor.

It localises to the cytoplasm. In terms of biological role, involved in correct processing of both the 5' and 3' ends of 23S rRNA precursor. Processes 30S rRNA precursor transcript even in absence of ribonuclease 3 (Rnc); Rnc processes 30S rRNA into smaller rRNA precursors. Cleaves more efficiently on assembled 50S ribosomal subunits. Cleavage is strongly stimulated by ribosomal protein L3 (RplC); 20-30% DMSO can replace RplC, suggesting RplC may alter rRNA conformation. The sequence is that of Mini-ribonuclease 3 (mrnC) from Bacillus subtilis (strain 168).